The following is a 118-amino-acid chain: Large ribosomal subunit protein bL20 (118 aa).

It belongs to the bacterial ribosomal protein bL20 family.

Functionally, binds directly to 23S ribosomal RNA and is necessary for the in vitro assembly process of the 50S ribosomal subunit. It is not involved in the protein synthesizing functions of that subunit. The chain is Large ribosomal subunit protein bL20 from Photorhabdus laumondii subsp. laumondii (strain DSM 15139 / CIP 105565 / TT01) (Photorhabdus luminescens subsp. laumondii).